A 203-amino-acid chain; its full sequence is Protein-L-isoaspartate O-methyltransferase (203 aa).

Residue Ser-50 is part of the active site.

Belongs to the methyltransferase superfamily. L-isoaspartyl/D-aspartyl protein methyltransferase family.

It is found in the cytoplasm. It carries out the reaction [protein]-L-isoaspartate + S-adenosyl-L-methionine = [protein]-L-isoaspartate alpha-methyl ester + S-adenosyl-L-homocysteine. Functionally, catalyzes the methyl esterification of L-isoaspartyl residues in peptides and proteins that result from spontaneous decomposition of normal L-aspartyl and L-asparaginyl residues. It plays a role in the repair and/or degradation of damaged proteins. The chain is Protein-L-isoaspartate O-methyltransferase from Methanococcoides burtonii (strain DSM 6242 / NBRC 107633 / OCM 468 / ACE-M).